Reading from the N-terminus, the 1202-residue chain is Protein HASTY 1 (1202 aa).

Residue methionine 1 is modified to N-acetylmethionine.

This sequence belongs to the exportin family. Interacts with RAN1. Expressed in roots, leaves and floral buds.

It is found in the nucleus. In terms of biological role, nucleocytoplasmic transporter involved in the nuclear export of microRNAs (miRNAs). Required for several miRNAs accumulation. Specifically required for miR156 accumulation which targets SPL3, SPL4 and SPL5 transcription factors. Involved in plant development through its role in miRNAs processing. Required for vegetative phase change and vegetative to reproductive phase transition. Functionally dependent on RAN1 binding. Does not seem to be involved in small interfering RNAs (siRNAs) processing. This chain is Protein HASTY 1 (HST1), found in Arabidopsis thaliana (Mouse-ear cress).